A 367-amino-acid chain; its full sequence is Putative F-box protein At4g10190 (367 aa).

Residues 3 to 53 (KRNIVDLPEDLVMEILARVPTVTLVRLQSTSKRWNVLIEDKRFAEQHFTNA) form the F-box domain.

This Arabidopsis thaliana (Mouse-ear cress) protein is Putative F-box protein At4g10190.